The chain runs to 589 residues: ATP-dependent lipid A-core flippase (589 aa).

A run of 5 helical transmembrane segments spans residues 29–49 (WLLV…STFL), 68–88 (ALWL…AGYI), 157–177 (VIGA…AILL), 254–274 (ISSA…LLIA), and 283–303 (LSPG…PALK). The ABC transmembrane type-1 domain occupies 32 to 314 (VVAACGALLE…LTNVQNMLQS (283 aa)). An ABC transporter domain is found at 346–582 (IEFRGITARY…DGLYAYLYSM (237 aa)). 380 to 387 (GRSGSGKS) serves as a coordination point for ATP.

This sequence belongs to the ABC transporter superfamily. Lipid exporter (TC 3.A.1.106) family. As to quaternary structure, homodimer.

It is found in the cell inner membrane. The enzyme catalyses ATP + H2O + lipid A-core oligosaccharideSide 1 = ADP + phosphate + lipid A-core oligosaccharideSide 2.. Functionally, involved in lipopolysaccharide (LPS) biosynthesis. Translocates lipid A-core from the inner to the outer leaflet of the inner membrane. Transmembrane domains (TMD) form a pore in the inner membrane and the ATP-binding domain (NBD) is responsible for energy generation. The sequence is that of ATP-dependent lipid A-core flippase from Xylella fastidiosa (strain Temecula1 / ATCC 700964).